A 512-amino-acid chain; its full sequence is Sodium/proline symporter (512 aa).

A run of 13 helical transmembrane segments spans residues 16–36 (WQTYIMIAVYFLILIVIGFYG), 54–74 (IGPYITALSAGASDMSGWMIM), 85–105 (LSAMWITIGLTLGAYINYFVV), 139–159 (IISGLIIVVFFTLYTHSGFVS), 174–194 (FGLILVAFIVIFYTFFGGYLA), 200–220 (FFQGVIMLIAMVMVPIVAMMN), 240–260 (LFKGLSFIGIISLFSWGLGYF), 286–306 (ISWMAVGLLGAVAVGLTGIAF), 327–347 (VLFHPLVGGFLLAAILAAIMS), 381–401 (FVMIGRLSVLVVAIVAIAIAW), 410–430 (LVGNAWAGFGASFSPLVLFAL), 438–458 (AGAVSGMVSGALVVIVWIAWI), and 467–487 (IFGLYEIIPGFIVSVIVTYVV).

Belongs to the sodium:solute symporter (SSF) (TC 2.A.21) family.

Its subcellular location is the cell membrane. The enzyme catalyses L-proline(in) + Na(+)(in) = L-proline(out) + Na(+)(out). Functionally, catalyzes the sodium-dependent uptake of extracellular L-proline. Since most S.aureus strains are L-proline auxotrophs, this transporter may aid the bacterial persistence during an infection of tissues with low proline concentrations. The chain is Sodium/proline symporter (putP) from Staphylococcus aureus (strain Mu3 / ATCC 700698).